Reading from the N-terminus, the 187-residue chain is Putative type I specificity subunit S.MpnORF289P N-terminus (187 aa).

This sequence belongs to the type-I restriction system S methylase family. In terms of assembly, the methyltransferase is composed of M and S polypeptides.

Functionally, the N-terminal section of a specificity (S) subunit of a type I methyltransferase (MTase); this subunit dictates DNA sequence specificity. The single R subunit has multiple frameshifts and is probably not expressed. The polypeptide is Putative type I specificity subunit S.MpnORF289P N-terminus (Mycoplasma pneumoniae (strain ATCC 29342 / M129 / Subtype 1) (Mycoplasmoides pneumoniae)).